Consider the following 448-residue polypeptide: Homogentisate 1,2-dioxygenase (448 aa).

Positions 1 to 26 (MNMLAPAAKNAFTPASPDRPAYQSGF) are disordered. Residue His-302 is the Proton acceptor of the active site. Residues His-345 and Glu-351 each contribute to the Fe cation site. Homogentisate is bound by residues Tyr-360 and His-381. Residue His-381 coordinates Fe cation.

This sequence belongs to the homogentisate dioxygenase family. Hexamer; dimer of trimers. It depends on Fe cation as a cofactor.

It catalyses the reaction homogentisate + O2 = 4-maleylacetoacetate + H(+). Its pathway is amino-acid degradation; L-phenylalanine degradation; acetoacetate and fumarate from L-phenylalanine: step 4/6. In terms of biological role, involved in the catabolism of homogentisate (2,5-dihydroxyphenylacetate or 2,5-OH-PhAc), a central intermediate in the degradation of phenylalanine and tyrosine. Catalyzes the oxidative ring cleavage of the aromatic ring of homogentisate to yield maleylacetoacetate. This is Homogentisate 1,2-dioxygenase from Ralstonia nicotianae (strain ATCC BAA-1114 / GMI1000) (Ralstonia solanacearum).